We begin with the raw amino-acid sequence, 236 residues long: MNQDQLKKMVGDAARDEVLKLPAGQILGVGTGSTANCFIDALAPHKDHFAGTVSSSNATTERLLKHGFKVLDPNDVVSLPAYVDGADEIDPQGHMIKGGGGALTREKIIASMAQQFICICDSSKQVPVLGNFALPVEIIPLAKGVVTRELEKLGGKVTLRLAKSTRADLNQTPSEPFVTDNGGWILDIAGLQIADPLKIESQINQIAGVITVGLFAKEKANILLVSNAAGVDRIVL.

Substrate-binding positions include 31–34 (TGST), 84–87 (DGAD), and 97–100 (KGGG). Residue E106 is the Proton acceptor of the active site. A substrate-binding site is contributed by K124.

This sequence belongs to the ribose 5-phosphate isomerase family. Homodimer.

The enzyme catalyses aldehydo-D-ribose 5-phosphate = D-ribulose 5-phosphate. Its pathway is carbohydrate degradation; pentose phosphate pathway; D-ribose 5-phosphate from D-ribulose 5-phosphate (non-oxidative stage): step 1/1. Functionally, catalyzes the reversible conversion of ribose-5-phosphate to ribulose 5-phosphate. This chain is Ribose-5-phosphate isomerase A, found in Polynucleobacter asymbioticus (strain DSM 18221 / CIP 109841 / QLW-P1DMWA-1) (Polynucleobacter necessarius subsp. asymbioticus).